Consider the following 522-residue polypeptide: MNANVPSDANCRRIICDGEYATVRYVGNVPPTPGLWLGVEWDNHLRGKHNGTHEGTKYFTCSHPTGGSFIRLKKANFGVDFLAALRKRYGLKSEQNEELVIGKKTVELVGFESIQEEQSKLNKLKDVSLRECAVSNAGEKGQICHSCPNIMTADLSKNLFSSWESLAHISSQLENLTSLDLSENKLNPSSNPSSLATSFCNLKVLSLNRTGMKWNEILQCASMWPALEELHLVSNDISLLEQPVNNLQNLTILDISNNKIVDGNQLHTIAFLPRLKQVIVSNNIISSISFPDVDFGHTAMFISLTSLAVNGNNISEWCVINELHKLLHLESLNCHGNPLMDLDKNPETVRQLIIAKIENLKFLNKTEIFPTERRGAELDYRKMFGNEWLKAGGSQNEEFNKPSRDFLQDHPRYSALIKKYGAPDEGELKQQQPFALKNQLLTLTIQCPEKPDKKPIQKKLPDSMTVQKVKGLLYRLLKVPGSDLKLSYQSSKMEGKEIELENDLKPLQFYSVENGDCLLVRW.

Positions 27–71 (GNVPPTPGLWLGVEWDNHLRGKHNGTHEGTKYFTCSHPTGGSFIR) constitute a CAP-Gly domain. 7 LRR repeats span residues 149–170 (NIMT…AHIS), 175–196 (NLTS…SSLA), 201–222 (NLKV…QCAS), 226–248 (ALEE…NNLQ), 249–270 (NLTI…HTIA), 274–295 (RLKQ…DVDF), and 303–324 (SLTS…NELH). The 43-residue stretch at 337 to 379 (NPLMDLDKNPETVRQLIIAKIENLKFLNKTEIFPTERRGAELD) folds into the LRRCT domain.

Belongs to the TBCE family. In terms of assembly, supercomplex made of cofactors A to E. Cofactors A and D function by capturing and stabilizing tubulin in a quasi-native conformation. Cofactor E binds to the cofactor D-tubulin complex; interaction with cofactor C then causes the release of tubulin polypeptides that are committed to the native state.

Its subcellular location is the cytoplasm. The protein localises to the cytoskeleton. Its function is as follows. Tubulin-folding protein; involved in the second step of the tubulin folding pathway. The chain is Tubulin-specific chaperone E (tbce) from Xenopus laevis (African clawed frog).